A 687-amino-acid chain; its full sequence is Glycine--tRNA ligase beta subunit (687 aa).

Belongs to the class-II aminoacyl-tRNA synthetase family. In terms of assembly, tetramer of two alpha and two beta subunits.

The protein localises to the cytoplasm. It catalyses the reaction tRNA(Gly) + glycine + ATP = glycyl-tRNA(Gly) + AMP + diphosphate. The chain is Glycine--tRNA ligase beta subunit from Neisseria meningitidis serogroup C / serotype 2a (strain ATCC 700532 / DSM 15464 / FAM18).